Here is a 211-residue protein sequence, read N- to C-terminus: ATP phosphoribosyltransferase (211 aa).

It belongs to the ATP phosphoribosyltransferase family. Short subfamily. As to quaternary structure, heteromultimer composed of HisG and HisZ subunits.

Its subcellular location is the cytoplasm. It carries out the reaction 1-(5-phospho-beta-D-ribosyl)-ATP + diphosphate = 5-phospho-alpha-D-ribose 1-diphosphate + ATP. It functions in the pathway amino-acid biosynthesis; L-histidine biosynthesis; L-histidine from 5-phospho-alpha-D-ribose 1-diphosphate: step 1/9. Functionally, catalyzes the condensation of ATP and 5-phosphoribose 1-diphosphate to form N'-(5'-phosphoribosyl)-ATP (PR-ATP). Has a crucial role in the pathway because the rate of histidine biosynthesis seems to be controlled primarily by regulation of HisG enzymatic activity. This is ATP phosphoribosyltransferase from Sorangium cellulosum (strain So ce56) (Polyangium cellulosum (strain So ce56)).